Here is a 681-residue protein sequence, read N- to C-terminus: Proline dehydrogenase 1, mitochondrial (681 aa).

Residues methionine 1–alanine 30 constitute a mitochondrion transit peptide. Residues serine 76 to glutamate 87 show a composition bias toward polar residues. 2 disordered regions span residues serine 76–proline 113 and glutamate 216–methionine 239. The span at threonine 88 to glutamine 99 shows a compositional bias: basic and acidic residues.

This sequence belongs to the proline oxidase family. The cofactor is FAD. As to expression, most abundant in developing nervous system.

The protein resides in the mitochondrion matrix. The catalysed reaction is L-proline + a quinone = (S)-1-pyrroline-5-carboxylate + a quinol + H(+). It functions in the pathway amino-acid degradation; L-proline degradation into L-glutamate; L-glutamate from L-proline: step 1/2. Its function is as follows. Converts proline to delta-1-pyrroline-5-carboxylate. Involved in the conversion of proline to glutamate, which functions as a transmitter at neuromuscular junctions. Glutamate deficiency could possibly account for reduced motor activity. This is Proline dehydrogenase 1, mitochondrial (slgA) from Drosophila melanogaster (Fruit fly).